Consider the following 480-residue polypeptide: Probable glycine dehydrogenase (decarboxylating) subunit 2 (480 aa).

The residue at position 265 (K265) is an N6-(pyridoxal phosphate)lysine.

Belongs to the GcvP family. C-terminal subunit subfamily. The glycine cleavage system is composed of four proteins: P, T, L and H. In this organism, the P 'protein' is a heterodimer of two subunits. It depends on pyridoxal 5'-phosphate as a cofactor.

The catalysed reaction is N(6)-[(R)-lipoyl]-L-lysyl-[glycine-cleavage complex H protein] + glycine + H(+) = N(6)-[(R)-S(8)-aminomethyldihydrolipoyl]-L-lysyl-[glycine-cleavage complex H protein] + CO2. The glycine cleavage system catalyzes the degradation of glycine. The P protein binds the alpha-amino group of glycine through its pyridoxal phosphate cofactor; CO(2) is released and the remaining methylamine moiety is then transferred to the lipoamide cofactor of the H protein. In Thermosipho africanus (strain TCF52B), this protein is Probable glycine dehydrogenase (decarboxylating) subunit 2.